A 199-amino-acid chain; its full sequence is Auxin-responsive protein IAA1 (199 aa).

The short motif at Leu-25–Leu-29 is the EAR-like (transcriptional repression) element. Positions Gly-31–Lys-74 are disordered. Low complexity predominate over residues Ser-47 to Ala-69. A PB1 domain is found at Ala-93–Ser-187.

This sequence belongs to the Aux/IAA family. Homodimers and heterodimers. As to expression, highly expressed in flowers. Expressed at low levels in roots and shoots.

It is found in the nucleus. Aux/IAA proteins are short-lived transcriptional factors that function as repressors of early auxin response genes at low auxin concentrations. In Oryza sativa subsp. japonica (Rice), this protein is Auxin-responsive protein IAA1 (IAA1).